Consider the following 567-residue polypeptide: 2-succinyl-5-enolpyruvyl-6-hydroxy-3-cyclohexene-1-carboxylate synthase (567 aa).

It belongs to the TPP enzyme family. MenD subfamily. In terms of assembly, homodimer. It depends on Mg(2+) as a cofactor. Mn(2+) is required as a cofactor. Requires thiamine diphosphate as cofactor.

The enzyme catalyses isochorismate + 2-oxoglutarate + H(+) = 5-enolpyruvoyl-6-hydroxy-2-succinyl-cyclohex-3-ene-1-carboxylate + CO2. Its pathway is quinol/quinone metabolism; 1,4-dihydroxy-2-naphthoate biosynthesis; 1,4-dihydroxy-2-naphthoate from chorismate: step 2/7. The protein operates within quinol/quinone metabolism; menaquinone biosynthesis. Catalyzes the thiamine diphosphate-dependent decarboxylation of 2-oxoglutarate and the subsequent addition of the resulting succinic semialdehyde-thiamine pyrophosphate anion to isochorismate to yield 2-succinyl-5-enolpyruvyl-6-hydroxy-3-cyclohexene-1-carboxylate (SEPHCHC). In Yersinia pseudotuberculosis serotype IB (strain PB1/+), this protein is 2-succinyl-5-enolpyruvyl-6-hydroxy-3-cyclohexene-1-carboxylate synthase.